The chain runs to 213 residues: Nucleoside triphosphate pyrophosphatase (213 aa).

Asp79 functions as the Proton acceptor in the catalytic mechanism.

Belongs to the Maf family. It depends on a divalent metal cation as a cofactor.

The protein localises to the cytoplasm. It catalyses the reaction a ribonucleoside 5'-triphosphate + H2O = a ribonucleoside 5'-phosphate + diphosphate + H(+). It carries out the reaction a 2'-deoxyribonucleoside 5'-triphosphate + H2O = a 2'-deoxyribonucleoside 5'-phosphate + diphosphate + H(+). Nucleoside triphosphate pyrophosphatase. May have a dual role in cell division arrest and in preventing the incorporation of modified nucleotides into cellular nucleic acids. The polypeptide is Nucleoside triphosphate pyrophosphatase (Rhodococcus erythropolis (strain PR4 / NBRC 100887)).